The sequence spans 215 residues: Pyrrolidone-carboxylate peptidase (215 aa).

Active-site residues include glutamate 80, cysteine 143, and histidine 167.

This sequence belongs to the peptidase C15 family. In terms of assembly, homotetramer.

Its subcellular location is the cytoplasm. It catalyses the reaction Release of an N-terminal pyroglutamyl group from a polypeptide, the second amino acid generally not being Pro.. In terms of biological role, removes 5-oxoproline from various penultimate amino acid residues except L-proline. The sequence is that of Pyrrolidone-carboxylate peptidase from Yersinia pestis bv. Antiqua (strain Antiqua).